The following is a 308-amino-acid chain: Ribonuclease HIII (308 aa).

In terms of domain architecture, RNase H type-2 spans 93–308 (MSVLGSDETG…ANTEKARKMI (216 aa)). Residues aspartate 99, glutamate 100, and aspartate 204 each coordinate a divalent metal cation.

This sequence belongs to the RNase HII family. RnhC subfamily. Requires Mn(2+) as cofactor. Mg(2+) serves as cofactor.

It is found in the cytoplasm. It carries out the reaction Endonucleolytic cleavage to 5'-phosphomonoester.. Its function is as follows. Endonuclease that specifically degrades the RNA of RNA-DNA hybrids. The protein is Ribonuclease HIII of Lysinibacillus sphaericus (strain C3-41).